Reading from the N-terminus, the 481-residue chain is Docking protein 1 (481 aa).

Met1 is modified (N-acetylmethionine). The region spanning 4-119 is the PH domain; the sequence is AVMEGPLFLQ…WVQTLCRNAF (116 aa). A Phosphoserine modification is found at Ser48. Positions 151–259 constitute an IRS-type PTB domain; that stretch reads EGSQFWVTVQ…HRQKAQGKAG (109 aa). Residues Ser269 and Ser291 each carry the phosphoserine modification. The interval 270–293 is disordered; sequence HEGEVAEGKLPSPPGPQELLDSPP. Tyr296 is subject to Phosphotyrosine. The tract at residues 307–329 is disordered; sequence PCPSQDSLYSDPLDSTSAQAGEG. Polar residues predominate over residues 310–325; it reads SQDSLYSDPLDSTSAQ. Phosphotyrosine is present on residues Tyr337 and Tyr341. Position 362 is a phosphotyrosine; by INSR (Tyr362). Tyr377 carries the post-translational modification Phosphotyrosine. The residue at position 398 (Tyr398) is a Phosphotyrosine; by INSR. The interval 404-481 is disordered; the sequence is PATDDYAVPP…KTGVKSEGST (78 aa). The residue at position 409 (Tyr409) is a Phosphotyrosine. Position 416 is a phosphoserine (Ser416). Over residues 436 to 458 the composition is skewed to polar residues; the sequence is ATGSGIKSHNSALYSQVQKSGAS. Residue Tyr449 is modified to Phosphotyrosine. Ser460 bears the Phosphoserine mark.

This sequence belongs to the DOK family. Type A subfamily. As to quaternary structure, interacts with ABL1. Interacts with RasGAP and INPP5D/SHIP1. Interacts directly with phosphorylated ITGB3. Interacts with SRMS (via the SH2 and SH3 domains). Post-translationally, constitutively tyrosine-phosphorylated. Phosphorylated by TEC. Phosphorylated by LYN. Phosphorylated on tyrosine residues by the insulin receptor kinase. Results in the negative regulation of the insulin signaling pathway. Phosphorylated on tyrosine residues by SRMS. Expressed in pancreas, heart, leukocyte and spleen. Expressed in both resting and activated peripheral blood T-cells. Expressed in breast cancer.

It localises to the cytoplasm. The protein resides in the nucleus. It is found in the perinuclear region. DOK proteins are enzymatically inert adaptor or scaffolding proteins. They provide a docking platform for the assembly of multimolecular signaling complexes. DOK1 appears to be a negative regulator of the insulin signaling pathway. Modulates integrin activation by competing with talin for the same binding site on ITGB3. This chain is Docking protein 1 (DOK1), found in Homo sapiens (Human).